The sequence spans 163 residues: tRNA-acetylating toxin 2 (163 aa).

Residues Leu89, Val91, His96, Gly97, Gln98, Gly99, Ala101, Arg102, and Glu132 each contribute to the acetyl-CoA site. Tyr137 is a catalytic residue. Arg139 provides a ligand contact to acetyl-CoA.

The protein belongs to the acetyltransferase family. GNAT subfamily. In terms of assembly, homodimer (in absence of antitoxin). Forms a complex with cognate antitoxin TacA2. Forms a 4:2 antitoxin:toxin complex with cognate antitoxin TacA2.

The catalysed reaction is glycyl-tRNA(Gly) + acetyl-CoA = N-acetylglycyl-tRNA(Gly) + CoA + H(+). Functionally, toxic component of a type II toxin-antitoxin (TA) system. Acetylates tRNA and inhibits translation. Acetylates exclusively Gly in situ. Overexpression during the lag phase of a tacA2-tacT2 deletion strain leads to very small increase in persister cells in the presence of cefotaxime but no detectable growth phenotype in absence of antibiotics. Compared to a protein with a single amino acid change (TacT2 from S.enterica NCTC 13349, Glu-29 is Lys in NCTC 13349) this protein binds tRNA very poorly and acetylates tRNA very poorly. Persister cell formation is neutralized by cognate antitoxin TacA2. Neutralized only by cognate antitoxin TacA2 (A8), but not by TacA1 or TacA3. Plays a role in persister cell formation. The TacA2-TacT2 complex both represses and derepresses expression of its own operon. This chain is tRNA-acetylating toxin 2, found in Salmonella typhimurium (strain 14028s / SGSC 2262).